Consider the following 197-residue polypeptide: dTTP/UTP pyrophosphatase (197 aa).

Residue D70 is the Proton acceptor of the active site.

This sequence belongs to the Maf family. YhdE subfamily. Requires a divalent metal cation as cofactor.

The protein resides in the cytoplasm. The enzyme catalyses dTTP + H2O = dTMP + diphosphate + H(+). It carries out the reaction UTP + H2O = UMP + diphosphate + H(+). Functionally, nucleoside triphosphate pyrophosphatase that hydrolyzes dTTP and UTP. May have a dual role in cell division arrest and in preventing the incorporation of modified nucleotides into cellular nucleic acids. This is dTTP/UTP pyrophosphatase from Yersinia pestis bv. Antiqua (strain Antiqua).